The sequence spans 258 residues: Tryptophan synthase alpha chain (258 aa).

Residues E52 and D63 each act as proton acceptor in the active site.

This sequence belongs to the TrpA family. In terms of assembly, tetramer of two alpha and two beta chains.

The catalysed reaction is (1S,2R)-1-C-(indol-3-yl)glycerol 3-phosphate + L-serine = D-glyceraldehyde 3-phosphate + L-tryptophan + H2O. It functions in the pathway amino-acid biosynthesis; L-tryptophan biosynthesis; L-tryptophan from chorismate: step 5/5. In terms of biological role, the alpha subunit is responsible for the aldol cleavage of indoleglycerol phosphate to indole and glyceraldehyde 3-phosphate. The sequence is that of Tryptophan synthase alpha chain from Streptococcus pneumoniae (strain Taiwan19F-14).